A 154-amino-acid polypeptide reads, in one-letter code: SsrA-binding protein (154 aa).

The interval 134 to 154 (DKREDIKKRDQERELSRRFKN) is disordered.

This sequence belongs to the SmpB family.

The protein localises to the cytoplasm. Functionally, required for rescue of stalled ribosomes mediated by trans-translation. Binds to transfer-messenger RNA (tmRNA), required for stable association of tmRNA with ribosomes. tmRNA and SmpB together mimic tRNA shape, replacing the anticodon stem-loop with SmpB. tmRNA is encoded by the ssrA gene; the 2 termini fold to resemble tRNA(Ala) and it encodes a 'tag peptide', a short internal open reading frame. During trans-translation Ala-aminoacylated tmRNA acts like a tRNA, entering the A-site of stalled ribosomes, displacing the stalled mRNA. The ribosome then switches to translate the ORF on the tmRNA; the nascent peptide is terminated with the 'tag peptide' encoded by the tmRNA and targeted for degradation. The ribosome is freed to recommence translation, which seems to be the essential function of trans-translation. The chain is SsrA-binding protein from Leuconostoc mesenteroides subsp. mesenteroides (strain ATCC 8293 / DSM 20343 / BCRC 11652 / CCM 1803 / JCM 6124 / NCDO 523 / NBRC 100496 / NCIMB 8023 / NCTC 12954 / NRRL B-1118 / 37Y).